Consider the following 489-residue polypeptide: GTPase Der (489 aa).

EngA-type G domains follow at residues 3–166 and 201–374; these read PVVA…FDDV and IKLA…DSST. GTP is bound by residues 9 to 16, 56 to 60, 118 to 121, 207 to 214, 254 to 258, and 319 to 322; these read GRPNVGKS, DTGGI, NKTD, DTAGV, and NKWD. One can recognise a KH-like domain in the interval 375 to 459; it reads KRISTSILTR…PIRIEFREGT (85 aa).

It belongs to the TRAFAC class TrmE-Era-EngA-EngB-Septin-like GTPase superfamily. EngA (Der) GTPase family. In terms of assembly, associates with the 50S ribosomal subunit.

Functionally, GTPase that plays an essential role in the late steps of ribosome biogenesis. The polypeptide is GTPase Der (Psychromonas ingrahamii (strain DSM 17664 / CCUG 51855 / 37)).